Reading from the N-terminus, the 350-residue chain is Protein O-mannose kinase (350 aa).

N-acetylmethionine is present on Met1. The Cytoplasmic portion of the chain corresponds to 1–20; it reads MEKQPQNKRRGLAPREVPPA. A helical; Signal-anchor for type II membrane protein transmembrane segment spans residues 21–43; the sequence is VGLLLIMALMNTLLYLCLDHFFI. The Lumenal portion of the chain corresponds to 44–350; that stretch reads APRQSIVDPR…AVMSQAREML (307 aa). In terms of domain architecture, Protein kinase spans 81-350; the sequence is VRQLKRVGEG…AVMSQAREML (270 aa). 3 N-linked (GlcNAc...) asparagine glycosylation sites follow: Asn165, Asn220, and Asn235.

Belongs to the protein kinase superfamily. Ser/Thr protein kinase family. STKL subfamily.

It localises to the endoplasmic reticulum membrane. The catalysed reaction is 3-O-[beta-D-GalNAc-(1-&gt;3)-beta-D-GlcNAc-(1-&gt;4)-alpha-D-Man]-L-Thr-[protein] + ATP = 3-O-[beta-D-GalNAc-(1-&gt;3)-beta-D-GlcNAc-(1-&gt;4)-(O-6-P-alpha-D-Man)]-Thr-[protein] + ADP + H(+). Functionally, protein O-mannose kinase that specifically mediates phosphorylation at the 6-position of an O-mannose of the trisaccharide (N-acetylgalactosamine (GalNAc)-beta-1,3-N-acetylglucosamine (GlcNAc)-beta-1,4-mannose) to generate phosphorylated O-mannosyl trisaccharide (N-acetylgalactosamine-beta-1,3-N-acetylglucosamine-beta-1,4-(phosphate-6-)mannose). Phosphorylated O-mannosyl trisaccharide is a carbohydrate structure present in alpha-dystroglycan (DAG1), which is required for binding laminin G-like domain-containing extracellular proteins with high affinity. Only shows kinase activity when the GalNAc-beta-3-GlcNAc-beta-terminus is linked to the 4-position of O-mannose, suggesting that this disaccharide serves as the substrate recognition motif. In Macaca fascicularis (Crab-eating macaque), this protein is Protein O-mannose kinase (POMK).